Consider the following 359-residue polypeptide: 4-galactosyl-N-acetylglucosaminide 3-alpha-L-fucosyltransferase 9 (359 aa).

Over 1–11 the chain is Cytoplasmic; it reads MTSTSKGILRP. Residues 12–32 form a helical; Signal-anchor for type II membrane protein membrane-spanning segment; sequence FLIVCIILGCFMACLLIYIKP. Residues 33–359 lie on the Lumenal side of the membrane; sequence TNSWIFSPME…VGNLEKWFWN (327 aa). Asn62 is a glycosylation site (N-linked (GlcNAc...) asparagine). The interval 63-168 is acceptor-binding; that stretch reads ETTILVWVWP…RRDSDIQVPY (106 aa). Residue Gln75 coordinates a beta-D-galactosyl-(1-&gt;4)-N-acetyl-beta-D-glucosaminyl derivative. 3 disulfide bridges follow: Cys82-Cys335, Cys91-Cys338, and Cys190-Cys238. A glycan (N-linked (GlcNAc...) asparagine) is linked at Asn101. An a beta-D-galactosyl-(1-&gt;4)-N-acetyl-beta-D-glucosaminyl derivative-binding site is contributed by Glu137. Glu137 (nucleophile) is an active-site residue. Glu137 serves as a coordination point for GDP-beta-L-fucose. An N-linked (GlcNAc...) asparagine glycan is attached at Asn153. Positions 168, 192, 194, 195, 202, 226, 241, 246, 252, 255, and 256 each coordinate GDP-beta-L-fucose. The tract at residues 169-326 is donor-binding; sequence GFLTVSTNPF…NWRKDFTVNL (158 aa). The interval 327-359 is acceptor-binding; it reads PRFWESHACLACDHVKRHQEYKSVGNLEKWFWN.

The protein belongs to the glycosyltransferase 10 family. Homodimer. In terms of processing, N-glycosylated with complex-type N-glycans. The glycan alpha-D-Man-(1-&gt;3)-beta-D-Man-(1-&gt;4)-GlcNAc-(1-&gt;4)-GlcNAc is attached at Asn-153. In terms of tissue distribution, strongly expressed in forebrain and stomach, lower expression in spleen and peripheral blood leukocytes, and no expression in small intestine, colon, liver, lung, kidney, adrenal cortex or uterus. Highly expressed in granulocytes. Not expressed in monocytes.

Its subcellular location is the golgi apparatus. The protein localises to the trans-Golgi network membrane. The protein resides in the golgi apparatus membrane. It catalyses the reaction a beta-D-galactosyl-(1-&gt;4)-N-acetyl-beta-D-glucosaminyl derivative + GDP-beta-L-fucose = a beta-D-galactosyl-(1-&gt;4)-[alpha-L-fucosyl-(1-&gt;3)]-N-acetyl-beta-D-glucosaminyl derivative + GDP + H(+). The enzyme catalyses an alpha-Neu5Ac-(2-&gt;3)-beta-D-Gal-(1-&gt;4)-beta-D-GlcNAc-(1-&gt;3)-beta-D-Gal-(1-&gt;4)-beta-D-GlcNAc derivative + GDP-beta-L-fucose = an alpha-Neu5Ac-(2-&gt;3)-beta-D-Gal-(1-&gt;4)-beta-D-GlcNAc-(1-&gt;3)-beta-D-Gal-(1-&gt;4)-[alpha-L-Fuc-(1-&gt;3)]-beta-D-GlcNAc derivative + GDP + H(+). It carries out the reaction alpha-N-glycoloylneuraminosyl-(2-&gt;3)-beta-D-galactosyl-(1-&gt;4)-N-acetyl-beta-D-glucosaminyl-(1-&gt;3)-beta-D-galactosyl-(1-&gt;4)-N-acetyl-beta-D-glucosaminyl-(1-&gt;3)-beta-D-galactosyl-(1-&gt;4)-beta-D-glucosyl-(1&lt;-&gt;1')-ceramide + GDP-beta-L-fucose = alpha-N-glycoloylneuraminosyl-(2-&gt;3)-beta-D-galactosyl-(1-&gt;4)-N-acetyl-beta-D-glucosaminyl-(1-&gt;3)-beta-D-galactosyl-(1-&gt;4)-[alpha-L-fucosyl-(1-&gt;3)]-N-acetyl-beta-D-glucosaminyl-(1-&gt;3)-beta-D-galactosyl-(1-&gt;4)-beta-D-glucosyl-(1&lt;-&gt;1')-ceramide + GDP + H(+). The catalysed reaction is alpha-D-galactosyl-(1-&gt;3)-beta-D-galactosyl-(1-&gt;4)-N-acetyl-beta-D-glucosaminyl-(1-&gt;3)-beta-D-galactosyl-(1-&gt;4)-beta-D-glucosyl-(1&lt;-&gt;1')-ceramide + GDP-beta-L-fucose = a neolactoside IV(3)-alpha-Gal,III(3)-alpha-Fuc-nLc4Cer + GDP + H(+). It catalyses the reaction a neolactoside nLc4Cer + GDP-beta-L-fucose = a neolactoside III(3)-alpha-Fuc-nLc4Cer + GDP + H(+). The enzyme catalyses an N-acetyl-alpha-neuraminyl-(2-&gt;3)-beta-D-galactosyl-(1-&gt;4)-N-acetyl-beta-D-glucosaminyl derivative + GDP-beta-L-fucose = an alpha-Neu5Ac-(2-&gt;3)-beta-D-Gal-(1-&gt;4)-[alpha-L-Fuc-(1-&gt;3)]-beta-D-GlcNAc derivative + GDP + H(+). It carries out the reaction beta-D-Gal-(1-&gt;4)-beta-D-GlcNAc-(1-&gt;3)-beta-D-Gal-(1-&gt;4)-D-Glc + GDP-beta-L-fucose = beta-D-Gal-(1-&gt;4)-[alpha-L-Fuc-(1-&gt;3)]-beta-D-GlcNAc-(1-&gt;3)-beta-D-Gal-(1-&gt;4)-D-Glc + GDP + H(+). The catalysed reaction is an alpha-L-Fuc-(1-&gt;2)-beta-D-Gal-(1-&gt;4)-beta-D-GlcNAc derivative + GDP-beta-L-fucose = an alpha-L-Fuc-(1-&gt;2)-beta-D-Gal-(1-&gt;4)-[alpha-L-Fuc-(1-&gt;3)]-beta-D-GlcNAc derivative + GDP + H(+). It functions in the pathway protein modification; protein glycosylation. The protein operates within glycolipid biosynthesis. Activated by Mn2+. Its function is as follows. Catalyzes alpha(1-&gt;3) linkage of fucosyl moiety transferred from GDP-beta-L-fucose to N-acetyl glucosamine (GlcNAc) within type 2 lactosamine (LacNAc, beta-D-Gal-(1-&gt;4)-beta-D-GlcNAc-) glycan attached to glycolipids and N- or O-linked glycoproteins. Fucosylates distal type 2 LacNAc and its fucosylated (H-type 2 LacNAc) and sialylated (sialyl-type 2 LacNAc) derivatives to form Lewis x (Lex) (CD15) and Lewis y (Ley) antigenic epitopes involved in cell adhesion and differentiation. Generates Lex epitopes in the brain, presumably playing a role in the maintenance of neuronal stemness and neurite outgrowth in progenitor neural cells. Fucosylates the internal type 2 LacNAc unit of the polylactosamine chain to form VIM-2 antigen that serves as recognition epitope for SELE. Can also modify milk oligosaccharides, in particular type 2 tetrasaccharide LNnT. This Homo sapiens (Human) protein is 4-galactosyl-N-acetylglucosaminide 3-alpha-L-fucosyltransferase 9.